Here is a 507-residue protein sequence, read N- to C-terminus: RNA-splicing ligase RtcB homolog (507 aa).

Mn(2+)-binding residues include D121, C124, H229, H261, and H355. A GMP-binding site is contributed by 228 to 232 (NHYAE). GMP contacts are provided by residues 355–356 (HN), 404–407 (GGTM), S411, 430–433 (HGAG), and K506. The active-site GMP-histidine intermediate is H430.

The protein belongs to the RtcB family. As to quaternary structure, catalytic component of the tRNA-splicing ligase complex. The cofactor is Mn(2+).

It catalyses the reaction a 3'-end 3'-phospho-ribonucleotide-RNA + a 5'-end dephospho-ribonucleoside-RNA + GTP = a ribonucleotidyl-ribonucleotide-RNA + GMP + diphosphate. It carries out the reaction a 3'-end 2',3'-cyclophospho-ribonucleotide-RNA + a 5'-end dephospho-ribonucleoside-RNA + GTP + H2O = a ribonucleotidyl-ribonucleotide-RNA + GMP + diphosphate + H(+). Functionally, catalytic subunit of the tRNA-splicing ligase complex that acts by directly joining spliced tRNA halves to mature-sized tRNAs by incorporating the precursor-derived splice junction phosphate into the mature tRNA as a canonical 3',5'-phosphodiester. May act as an RNA ligase with broad substrate specificity, and may function toward other RNAs. The chain is RNA-splicing ligase RtcB homolog from Micromonas pusilla (strain CCMP1545) (Picoplanktonic green alga).